A 291-amino-acid polypeptide reads, in one-letter code: uncharacterized protein (291 aa).

The 192-residue stretch at 5–196 folds into the PNPLA domain; it reads GVFSGGGVKG…LSNFPIWLFS (192 aa). The GXGXXG signature appears at 9-14; sequence GGGVKG. The chain crosses the membrane as a helical span at residues 34–50; that stretch reads VAGTSAGAIIAAFIASG. The GXSXG motif lies at 36–40; that stretch reads GTSAG. The Nucleophile role is filled by serine 38. Aspartate 183 serves as the catalytic Proton acceptor. The short motif at 183 to 185 is the DGA/G element; that stretch reads DGG.

Its subcellular location is the cell membrane. In terms of biological role, probable lipid hydrolase. This is an uncharacterized protein from Bacillus subtilis (strain 168).